A 375-amino-acid chain; its full sequence is Neutral protease 2 homolog MGYG_00813 (375 aa).

The first 19 residues, 1–19, serve as a signal peptide directing secretion; that stretch reads MQVIVALAALSSLAAPALG. The propeptide occupies 20–190; that stretch reads FSIPRGVPVS…SGPLTRIGKR (171 aa). Intrachain disulfides connect Cys198/Cys268 and Cys275/Cys293. Position 318 (His318) interacts with Zn(2+). Residue Glu319 is part of the active site. Residues His322 and Asp333 each contribute to the Zn(2+) site.

The protein belongs to the peptidase M35 family. Zn(2+) serves as cofactor.

The protein localises to the secreted. It carries out the reaction Preferential cleavage of bonds with hydrophobic residues in P1'. Also 3-Asn-|-Gln-4 and 8-Gly-|-Ser-9 bonds in insulin B chain.. Its function is as follows. Secreted metalloproteinase that allows assimilation of proteinaceous substrates. Shows high activities on basic nuclear substrates such as histone and protamine. May be involved in virulence. This is Neutral protease 2 homolog MGYG_00813 from Arthroderma gypseum (strain ATCC MYA-4604 / CBS 118893) (Microsporum gypseum).